We begin with the raw amino-acid sequence, 138 residues long: Small ribosomal subunit protein uS11c (138 aa).

Positions 1–23 are disordered; sequence MAKPIPRIGSRKNGRIGSRKSGR. The span at 9-23 shows a compositional bias: basic residues; sequence GSRKNGRIGSRKSGR.

This sequence belongs to the universal ribosomal protein uS11 family. As to quaternary structure, part of the 30S ribosomal subunit.

The protein resides in the plastid. It is found in the chloroplast. This Buxus microphylla (Littleleaf boxwood) protein is Small ribosomal subunit protein uS11c.